The following is a 222-amino-acid chain: Imidazoleglycerol-phosphate dehydratase (222 aa).

It belongs to the imidazoleglycerol-phosphate dehydratase family.

The enzyme catalyses D-erythro-1-(imidazol-4-yl)glycerol 3-phosphate = 3-(imidazol-4-yl)-2-oxopropyl phosphate + H2O. Its pathway is amino-acid biosynthesis; L-histidine biosynthesis; L-histidine from 5-phospho-alpha-D-ribose 1-diphosphate: step 6/9. This is Imidazoleglycerol-phosphate dehydratase (HIS3) from Scheffersomyces stipitis (strain ATCC 58785 / CBS 6054 / NBRC 10063 / NRRL Y-11545) (Yeast).